Reading from the N-terminus, the 257-residue chain is UPF0246 protein Shewana3_3143 (257 aa).

This sequence belongs to the UPF0246 family.

The sequence is that of UPF0246 protein Shewana3_3143 from Shewanella sp. (strain ANA-3).